Reading from the N-terminus, the 209-residue chain is MGKFEVLDHPLIQHKLTIIREKNCGTKVFREMVNEISTLMAYEVSRDMPLKDIEIETPIAKSTQKTLAGKKVAIVPILRAGLGMVDGFLNMIPAAKVGHVGMYRDEKTLKPVEYFVKLPSDISQRQLFVVDPMLATGGSAIMAMDMLKKRGASNIKFMCLVAAPEGVKALRDAHPDIDVYTAALDDHLNEDGYIVPGLGDAGDRLFGTK.

5-phospho-alpha-D-ribose 1-diphosphate is bound by residues Arg-79, Arg-104, and 131-139; that span reads DPMLATGGS. Residues Ile-194 and 199–201 contribute to the uracil site; that span reads GDA. 5-phospho-alpha-D-ribose 1-diphosphate is bound at residue Asp-200.

This sequence belongs to the UPRTase family. The cofactor is Mg(2+).

The catalysed reaction is UMP + diphosphate = 5-phospho-alpha-D-ribose 1-diphosphate + uracil. The protein operates within pyrimidine metabolism; UMP biosynthesis via salvage pathway; UMP from uracil: step 1/1. Its activity is regulated as follows. Allosterically activated by GTP. Catalyzes the conversion of uracil and 5-phospho-alpha-D-ribose 1-diphosphate (PRPP) to UMP and diphosphate. The polypeptide is Uracil phosphoribosyltransferase (Lactiplantibacillus plantarum (strain ATCC BAA-793 / NCIMB 8826 / WCFS1) (Lactobacillus plantarum)).